The chain runs to 296 residues: POM121-like protein 12 (296 aa).

Disordered regions lie at residues 1 to 54 (MGAA…SPWP) and 142 to 162 (APPE…RPAG). The segment covering 34–52 (SRSPSTPQTTPSPQGRQSP) has biased composition (low complexity).

This sequence belongs to the POM121 family.

This Homo sapiens (Human) protein is POM121-like protein 12 (POM121L12).